The following is a 199-amino-acid chain: Holliday junction branch migration complex subunit RuvA (199 aa).

Positions 1–63 are domain I; that stretch reads MIGCLIGEVF…EDAQQLYGFS (63 aa). Residues 64 to 142 form a domain II region; it reads DAQEKTIFRT…TLAQGTSSAA (79 aa). The tract at residues 143-150 is flexible linker; it reads ALPQIQFV. The tract at residues 150–199 is domain III; it reads VSNSPVAEAEAALQSLGYKPLEAQKAVAAVKADYTESADIIRAALKSMMK.

Belongs to the RuvA family. As to quaternary structure, homotetramer. Forms an RuvA(8)-RuvB(12)-Holliday junction (HJ) complex. HJ DNA is sandwiched between 2 RuvA tetramers; dsDNA enters through RuvA and exits via RuvB. An RuvB hexamer assembles on each DNA strand where it exits the tetramer. Each RuvB hexamer is contacted by two RuvA subunits (via domain III) on 2 adjacent RuvB subunits; this complex drives branch migration. In the full resolvosome a probable DNA-RuvA(4)-RuvB(12)-RuvC(2) complex forms which resolves the HJ.

It localises to the cytoplasm. The RuvA-RuvB-RuvC complex processes Holliday junction (HJ) DNA during genetic recombination and DNA repair, while the RuvA-RuvB complex plays an important role in the rescue of blocked DNA replication forks via replication fork reversal (RFR). RuvA specifically binds to HJ cruciform DNA, conferring on it an open structure. The RuvB hexamer acts as an ATP-dependent pump, pulling dsDNA into and through the RuvAB complex. HJ branch migration allows RuvC to scan DNA until it finds its consensus sequence, where it cleaves and resolves the cruciform DNA. This Acinetobacter baumannii (strain SDF) protein is Holliday junction branch migration complex subunit RuvA.